We begin with the raw amino-acid sequence, 500 residues long: Coiled-coil domain-containing protein 125 (500 aa).

The disordered stretch occupies residues 1–105 (MSKVPRSSSE…TDSNSELSDE (105 aa)). The segment covering 10 to 23 (EAEDIWETEDDMTE) has biased composition (acidic residues). A compositionally biased stretch (polar residues) spans 92–101 (RLSSTDSNSE). Coiled coils occupy residues 101–237 (ELSD…LEAL) and 286–314 (STRKLVLQLRHELETLQKSKEEAHITADA). Position 492 is a phosphoserine (serine 492).

In terms of tissue distribution, expressed in many tissues, with highest levels in spleen, thymus and bone marrow.

The protein localises to the cytoplasm. In terms of biological role, may be involved in the regulation of cell migration. This is Coiled-coil domain-containing protein 125 (Ccdc125) from Mus musculus (Mouse).